The primary structure comprises 847 residues: uncharacterized protein (847 aa).

Positions 116-126 (TGSSELTTSKT) are enriched in polar residues. 3 disordered regions span residues 116–153 (TGSS…TPIE), 208–245 (LKNF…RLSP), and 361–392 (DLEK…SNVI). Basic and acidic residues predominate over residues 128–145 (IDVDTKEQENRLKQKAEA). Residues 368-378 (SSSASLSTNKL) are compositionally biased toward polar residues.

This is an uncharacterized protein from Caenorhabditis elegans.